Consider the following 459-residue polypeptide: Bifunctional protein GlmU (459 aa).

The interval 1–229 is pyrophosphorylase; sequence MSNFAIILAA…FDESLGVNDR (229 aa). Residues 8-11, Lys-22, Gln-72, and 77-78 each bind UDP-N-acetyl-alpha-D-glucosamine; these read LAAG and GT. Mg(2+) is bound at residue Asp-102. The UDP-N-acetyl-alpha-D-glucosamine site is built by Gly-139, Glu-154, Asn-169, and Asn-227. Asn-227 is a binding site for Mg(2+). The tract at residues 230–250 is linker; sequence VALATAESVMRRRINHKHMVN. Residues 251-459 are N-acetyltransferase; that stretch reads GVSFVNPEAT…TRLPHHPKNQ (209 aa). UDP-N-acetyl-alpha-D-glucosamine-binding residues include Arg-332 and Lys-350. The Proton acceptor role is filled by His-362. UDP-N-acetyl-alpha-D-glucosamine contacts are provided by Tyr-365 and Asn-376. Acetyl-CoA contacts are provided by residues Ala-379, 385–386, Ser-404, Ala-422, and Arg-439; that span reads NY.

The protein in the N-terminal section; belongs to the N-acetylglucosamine-1-phosphate uridyltransferase family. In the C-terminal section; belongs to the transferase hexapeptide repeat family. In terms of assembly, homotrimer. It depends on Mg(2+) as a cofactor.

Its subcellular location is the cytoplasm. The enzyme catalyses alpha-D-glucosamine 1-phosphate + acetyl-CoA = N-acetyl-alpha-D-glucosamine 1-phosphate + CoA + H(+). It carries out the reaction N-acetyl-alpha-D-glucosamine 1-phosphate + UTP + H(+) = UDP-N-acetyl-alpha-D-glucosamine + diphosphate. It functions in the pathway nucleotide-sugar biosynthesis; UDP-N-acetyl-alpha-D-glucosamine biosynthesis; N-acetyl-alpha-D-glucosamine 1-phosphate from alpha-D-glucosamine 6-phosphate (route II): step 2/2. It participates in nucleotide-sugar biosynthesis; UDP-N-acetyl-alpha-D-glucosamine biosynthesis; UDP-N-acetyl-alpha-D-glucosamine from N-acetyl-alpha-D-glucosamine 1-phosphate: step 1/1. The protein operates within bacterial outer membrane biogenesis; LPS lipid A biosynthesis. Its function is as follows. Catalyzes the last two sequential reactions in the de novo biosynthetic pathway for UDP-N-acetylglucosamine (UDP-GlcNAc). The C-terminal domain catalyzes the transfer of acetyl group from acetyl coenzyme A to glucosamine-1-phosphate (GlcN-1-P) to produce N-acetylglucosamine-1-phosphate (GlcNAc-1-P), which is converted into UDP-GlcNAc by the transfer of uridine 5-monophosphate (from uridine 5-triphosphate), a reaction catalyzed by the N-terminal domain. The protein is Bifunctional protein GlmU of Streptococcus pneumoniae (strain Taiwan19F-14).